Reading from the N-terminus, the 974-residue chain is Isoleucine--tRNA ligase (974 aa).

A 'HIGH' region motif is present at residues 69-79 (PYANGALHMGH). Residue Glu-585 participates in L-isoleucyl-5'-AMP binding. The short motif at 626–630 (KMSKS) is the 'KMSKS' region element. Residue Lys-629 coordinates ATP. Zn(2+)-binding residues include Cys-939, Cys-942, Cys-959, and Cys-962.

It belongs to the class-I aminoacyl-tRNA synthetase family. IleS type 1 subfamily. Monomer. It depends on Zn(2+) as a cofactor.

The protein resides in the cytoplasm. The enzyme catalyses tRNA(Ile) + L-isoleucine + ATP = L-isoleucyl-tRNA(Ile) + AMP + diphosphate. Its function is as follows. Catalyzes the attachment of isoleucine to tRNA(Ile). As IleRS can inadvertently accommodate and process structurally similar amino acids such as valine, to avoid such errors it has two additional distinct tRNA(Ile)-dependent editing activities. One activity is designated as 'pretransfer' editing and involves the hydrolysis of activated Val-AMP. The other activity is designated 'posttransfer' editing and involves deacylation of mischarged Val-tRNA(Ile). The polypeptide is Isoleucine--tRNA ligase (Parasynechococcus marenigrum (strain WH8102)).